The chain runs to 531 residues: CTP synthase (531 aa).

The amidoligase domain stretch occupies residues Met-1–Leu-264. A CTP-binding site is contributed by Ser-13. Ser-13 contributes to the UTP binding site. Residue Gly-14–Val-19 participates in ATP binding. An L-glutamine-binding site is contributed by Tyr-54. Asp-71 is an ATP binding site. Residues Asp-71 and Glu-139 each contribute to the Mg(2+) site. CTP-binding positions include Asp-146–Glu-148, Lys-185–Gln-190, and Lys-221. Residues Lys-185–Gln-190 and Lys-221 contribute to the UTP site. The 239-residue stretch at Cys-293–Arg-531 folds into the Glutamine amidotransferase type-1 domain. Gly-351 serves as a coordination point for L-glutamine. Cys-378 acts as the Nucleophile; for glutamine hydrolysis in catalysis. L-glutamine contacts are provided by residues Phe-379 to Gln-382, Glu-402, and Arg-459. Active-site residues include His-504 and Glu-506.

This sequence belongs to the CTP synthase family. In terms of assembly, homotetramer.

It catalyses the reaction UTP + L-glutamine + ATP + H2O = CTP + L-glutamate + ADP + phosphate + 2 H(+). The enzyme catalyses L-glutamine + H2O = L-glutamate + NH4(+). The catalysed reaction is UTP + NH4(+) + ATP = CTP + ADP + phosphate + 2 H(+). The protein operates within pyrimidine metabolism; CTP biosynthesis via de novo pathway; CTP from UDP: step 2/2. Allosterically activated by GTP, when glutamine is the substrate; GTP has no effect on the reaction when ammonia is the substrate. The allosteric effector GTP functions by stabilizing the protein conformation that binds the tetrahedral intermediate(s) formed during glutamine hydrolysis. Inhibited by the product CTP, via allosteric rather than competitive inhibition. Functionally, catalyzes the ATP-dependent amination of UTP to CTP with either L-glutamine or ammonia as the source of nitrogen. Regulates intracellular CTP levels through interactions with the four ribonucleotide triphosphates. This chain is CTP synthase, found in Pyrobaculum calidifontis (strain DSM 21063 / JCM 11548 / VA1).